Here is a 427-residue protein sequence, read N- to C-terminus: Histidinol dehydrogenase (427 aa).

Positions 125, 186, and 209 each coordinate NAD(+). Substrate contacts are provided by S234, Q256, and H259. Zn(2+) contacts are provided by Q256 and H259. Residues E325 and H326 each act as proton acceptor in the active site. Substrate contacts are provided by H326, D359, E413, and H419. D359 is a Zn(2+) binding site. H419 provides a ligand contact to Zn(2+).

Belongs to the histidinol dehydrogenase family. Zn(2+) is required as a cofactor.

It carries out the reaction L-histidinol + 2 NAD(+) + H2O = L-histidine + 2 NADH + 3 H(+). It participates in amino-acid biosynthesis; L-histidine biosynthesis; L-histidine from 5-phospho-alpha-D-ribose 1-diphosphate: step 9/9. Catalyzes the sequential NAD-dependent oxidations of L-histidinol to L-histidinaldehyde and then to L-histidine. The protein is Histidinol dehydrogenase of Leptospira interrogans serogroup Icterohaemorrhagiae serovar copenhageni (strain Fiocruz L1-130).